A 499-amino-acid polypeptide reads, in one-letter code: Probable dipeptidase B (499 aa).

C26 is an active-site residue.

The protein belongs to the peptidase C69 family.

The catalysed reaction is an L-aminoacyl-L-amino acid + H2O = 2 an L-alpha-amino acid. This is Probable dipeptidase B (pepDB) from Streptococcus pyogenes serotype M18 (strain MGAS8232).